We begin with the raw amino-acid sequence, 84 residues long: Small ribosomal subunit protein uS17 (84 aa).

Belongs to the universal ribosomal protein uS17 family. In terms of assembly, part of the 30S ribosomal subunit.

Its function is as follows. One of the primary rRNA binding proteins, it binds specifically to the 5'-end of 16S ribosomal RNA. This chain is Small ribosomal subunit protein uS17, found in Clostridium botulinum (strain Alaska E43 / Type E3).